A 655-amino-acid chain; its full sequence is p-hydroxybenzoic acid efflux pump subunit AaeB (655 aa).

11 consecutive transmembrane segments (helical) span residues 13 to 33 (FAVK…HFQL), 38 to 58 (WAVL…GGEP), 69 to 89 (LRII…IAMI), 93 to 113 (LLMI…SSLV), 121 to 141 (WGLA…EPLL), 152 to 172 (EIVI…PRSI), 370 to 390 (LFWL…IAVV), 407 to 427 (FIYG…VIIP), 431 to 451 (QSML…GIEV), 459 to 479 (MGAL…TFHF), and 482 to 502 (FLDS…VILL).

This sequence belongs to the aromatic acid exporter ArAE (TC 2.A.85) family.

The protein resides in the cell inner membrane. Forms an efflux pump with AaeA. Could function as a metabolic relief valve, allowing to eliminate certain compounds when they accumulate to high levels in the cell. This Escherichia coli O6:K15:H31 (strain 536 / UPEC) protein is p-hydroxybenzoic acid efflux pump subunit AaeB.